Reading from the N-terminus, the 921-residue chain is Translation initiation factor IF-2 (921 aa).

The disordered stretch occupies residues 1 to 296 (MADNNTPGDK…PGPQKQRGRL (296 aa)). Over residues 80–89 (RPSGPRPGSS) the composition is skewed to low complexity. Residues 116-182 (ARVRDMEERR…AKKRFGEGEA (67 aa)) show a composition bias toward basic and acidic residues. A compositionally biased stretch (low complexity) spans 183–257 (PRPATAAPQQ…LGRAPGVAAG (75 aa)). Positions 417–586 (PRSPVVTVMG…MIALQADILD (170 aa)) constitute a tr-type G domain. Residues 426 to 433 (GHVDHGKT) form a G1 region. Residue 426 to 433 (GHVDHGKT) coordinates GTP. The G2 stretch occupies residues 451–455 (GITQH). The segment at 474–477 (DTPG) is G3. Residues 474-478 (DTPGH) and 528-531 (NKID) each bind GTP. The tract at residues 528–531 (NKID) is G4. Positions 564-566 (SAK) are G5.

Belongs to the TRAFAC class translation factor GTPase superfamily. Classic translation factor GTPase family. IF-2 subfamily.

The protein localises to the cytoplasm. Its function is as follows. One of the essential components for the initiation of protein synthesis. Protects formylmethionyl-tRNA from spontaneous hydrolysis and promotes its binding to the 30S ribosomal subunits. Also involved in the hydrolysis of GTP during the formation of the 70S ribosomal complex. This Bradyrhizobium sp. (strain BTAi1 / ATCC BAA-1182) protein is Translation initiation factor IF-2.